We begin with the raw amino-acid sequence, 837 residues long: Putative dimethyl sulfoxide reductase catalytic subunit A (837 aa).

Residues 1-36 (MSDTDLNATRRDVLKSGAVAAVGLSGGGLLSTLQEA) constitute a signal peptide (tat-type signal). The 58-residue stretch at 53-110 (DQVVKTACSPNCRGKCPLDVFVRDGQIKKVEQQVPAAKTFKRGCTLGMTHLQRVYNAD) folds into the 4Fe-4S Mo/W bis-MGD-type domain. Positions 60, 64, 68, and 96 each coordinate [4Fe-4S] cluster. A Mo-bis(molybdopterin guanine dinucleotide)-binding site is contributed by N200. Residues 813–837 (EHQSNEYTQHNPRGSSGTATDGDSS) form a disordered region. Over residues 826–837 (GSSGTATDGDSS) the composition is skewed to low complexity.

The protein belongs to the prokaryotic molybdopterin-containing oxidoreductase family. Probable multiprotein complex that likely consists of DmsA, DmsB and DmsC. Mo-bis(molybdopterin guanine dinucleotide) is required as a cofactor. The cofactor is [4Fe-4S] cluster. Post-translationally, predicted to be exported by the Tat system. The position of the signal peptide cleavage has not been experimentally proven.

Its subcellular location is the cell membrane. The catalysed reaction is dimethyl sulfide + a menaquinone + H2O = dimethyl sulfoxide + a menaquinol. Its function is as follows. Dimethyl sulfoxide (DMSO) reductase catalyzes the reduction of dimethyl sulfoxide (DMSO) to dimethyl sulfide (DMS) during anaerobic respiration; it can also use trimethylamine N-oxide (TMAO) as terminal electron acceptor. Required for anaerobic respiration on DMSO and TMAO; subunit A is proposed to be catalytically active. This is Putative dimethyl sulfoxide reductase catalytic subunit A (dmsA) from Halobacterium salinarum (strain ATCC 700922 / JCM 11081 / NRC-1) (Halobacterium halobium).